The sequence spans 396 residues: Putative N(4)-(beta-N-acetylglucosaminyl)-L-asparaginase GE19290 (396 aa).

A signal peptide spans 1-23; it reads MKRHLKACLWVLCFASTALSSLA. 2 disulfide bridges follow: Cys-100–Cys-105 and Cys-199–Cys-215. The Nucleophile role is filled by Thr-246. Substrate-binding positions include 274 to 277 and 297 to 300; these read RVGD and TGDG. Cysteines 357 and 384 form a disulfide.

It belongs to the Ntn-hydrolase family. Heterotetramer of two alpha and two beta chains arranged as a dimer of alpha/beta heterodimers. In terms of processing, cleaved into an alpha and beta chain by autocatalysis; this activates the enzyme. The N-terminal residue of the beta subunit is responsible for the nucleophile hydrolase activity.

It catalyses the reaction N(4)-(beta-N-acetyl-D-glucosaminyl)-L-asparagine + H2O = N-acetyl-beta-D-glucosaminylamine + L-aspartate + H(+). Its function is as follows. Cleaves the GlcNAc-Asn bond which joins oligosaccharides to the peptide of asparagine-linked glycoproteins. In Drosophila yakuba (Fruit fly), this protein is Putative N(4)-(beta-N-acetylglucosaminyl)-L-asparaginase GE19290.